An 817-amino-acid polypeptide reads, in one-letter code: Probable beta-glucosidase G (817 aa).

The first 20 residues, 1-20, serve as a signal peptide directing secretion; sequence MANIAHLIVSGLLAATVAHG. N-linked (GlcNAc...) asparagine glycans are attached at residues Asn40, Asn58, Asn229, and Asn276. Asp304 is a catalytic residue. Residues Asn343, Asn350, Asn402, Asn507, Asn563, Asn584, Asn623, Asn662, Asn679, and Asn715 are each glycosylated (N-linked (GlcNAc...) asparagine).

This sequence belongs to the glycosyl hydrolase 3 family.

The protein localises to the secreted. It catalyses the reaction Hydrolysis of terminal, non-reducing beta-D-glucosyl residues with release of beta-D-glucose.. It functions in the pathway glycan metabolism; cellulose degradation. Its function is as follows. Beta-glucosidases are one of a number of cellulolytic enzymes involved in the degradation of cellulosic biomass. Catalyzes the last step releasing glucose from the inhibitory cellobiose. This is Probable beta-glucosidase G (bglG) from Aspergillus terreus (strain NIH 2624 / FGSC A1156).